A 197-amino-acid polypeptide reads, in one-letter code: Nucleoid occlusion factor SlmA (197 aa).

Positions 7–67 (INRREHILQC…GLIEFIEDAI (61 aa)) constitute an HTH tetR-type domain. A DNA-binding region (H-T-H motif) is located at residues 30-49 (TTAKLAAEVGVSEAALYRHF).

The protein belongs to the nucleoid occlusion factor SlmA family. Homodimer. Interacts with FtsZ.

Its subcellular location is the cytoplasm. The protein localises to the nucleoid. In terms of biological role, required for nucleoid occlusion (NO) phenomenon, which prevents Z-ring formation and cell division over the nucleoid. Acts as a DNA-associated cell division inhibitor that binds simultaneously chromosomal DNA and FtsZ, and disrupts the assembly of FtsZ polymers. SlmA-DNA-binding sequences (SBS) are dispersed on non-Ter regions of the chromosome, preventing FtsZ polymerization at these regions. In Shewanella denitrificans (strain OS217 / ATCC BAA-1090 / DSM 15013), this protein is Nucleoid occlusion factor SlmA.